Consider the following 326-residue polypeptide: Microtubule-associated protein RP/EB family member 2 (326 aa).

Serine 9 carries the post-translational modification Phosphoserine. The Calponin-homology (CH) domain occupies 56-158 (TMSRHDIIAW…FIQWFKKFYD (103 aa)). A Phosphotyrosine modification is found at tyrosine 166. Disordered stretches follow at residues 170–239 (EARQ…DKDL) and 297–326 (YASD…QEEY). The interval 186-326 (QIFNLPKKSH…DQQPQQQEEY (141 aa)) is DCTN1-binding. A compositionally biased stretch (low complexity) spans 199–233 (SPTAGAAKSSPAAKPGSTPSRPSSAKRASSSGSAS). Phosphoserine occurs at positions 218 and 235. Positions 235–305 (SDKDLETQVI…LYASDEQEGQ (71 aa)) constitute an EB1 C-terminal domain. The interval 258–301 (EGVEKERDFYFGKLREIELLCQEHGQENDDLVQRLMEVLYASDE) is APC-binding. A compositionally biased stretch (acidic residues) spans 300 to 312 (DEQEGQTEEPEVE). A compositionally biased stretch (low complexity) spans 317 to 326 (DQQPQQQEEY).

This sequence belongs to the MAPRE family. In terms of assembly, interacts with DCTN1. Interacts with APC (via C-terminal). Interacts with monomeric and polymerized tubulin. Interacts with SLAIN1. Interacts (via the N-terminal region) with BAG1. Interacts with ASB14. Interacts with HAX1; this interaction is essential for epidermal cell migration. In terms of processing, phosphorylated at Ser-235 by CK2 leading to enhanced cell adhesion. Phosphorylated by CDK1 and AURKB during mitosis reduces the binding affinity of MAPRE2 for microtubules. Post-translationally, ubiquitinated in an ASB14-dependent manner; leading to proteasomal degradation.

The protein localises to the cytoplasm. Its subcellular location is the cytoskeleton. Its function is as follows. Adapter protein that is involved in microtubule polymerization, and spindle function by stabilizing microtubules and anchoring them at centrosomes. Therefore, ensures mitotic progression and genome stability. Acts as a central regulator of microtubule reorganization in apico-basal epithelial differentiation. Plays a role during oocyte meiosis by regulating microtubule dynamics. Participates in neurite growth by interacting with plexin B3/PLXNB3 and microtubule reorganization during apico-basal epithelial differentiation. Also plays an essential role for cell migration and focal adhesion dynamics. Mechanistically, recruits HAX1 to microtubules in order to regulate focal adhesion dynamics. The protein is Microtubule-associated protein RP/EB family member 2 (Mapre2) of Rattus norvegicus (Rat).